Reading from the N-terminus, the 932-residue chain is Chaperone protein ClpC3, chloroplastic (932 aa).

Positions 1–20 are disordered; the sequence is MERTLLNPPPSLRSPACRTT. The transit peptide at 1-48 directs the protein to the chloroplast; that stretch reads MERTLLNPPPSLRSPACRTTTATRIRPSSSMATMIPTPPPMRHARLVK. In terms of domain architecture, Clp R spans 99–240; it reads FDMFTDKAIK…RSEVIRMISD (142 aa). Repeat regions lie at residues 102–167 and 177–240; these read FTDK…AGRG and FTPA…MISD. Residues 264 to 511 are i; the sequence is LLEYGTNLTK…LVRLRNAQLP (248 aa). 309–316 serves as a coordination point for ATP; the sequence is GEPGVGKT. The 36-residue stretch at 518-553 folds into the UVR domain; that stretch reads EKKLKKIMAEKSEAIRSQDFEKAGALRGEEVELKSE. Positions 579 to 770 are II; sequence VTEADVQHIV…LIIMTSNVGS (192 aa). Position 653–660 (653–660) interacts with ATP; sequence GPTGVGKS.

It belongs to the ClpA/ClpB family. ClpC subfamily.

The protein localises to the plastid. The protein resides in the chloroplast. Functionally, molecular chaperone that may interact with a ClpP-like protease involved in degradation of denatured proteins in the chloroplast. This Oryza sativa subsp. japonica (Rice) protein is Chaperone protein ClpC3, chloroplastic (CLPC3).